Here is a 25-residue protein sequence, read N- to C-terminus: Pregnancy-associated glycoprotein 72 (25 aa).

N-linked (GlcNAc...) asparagine glycans are attached at residues Asn4 and Asn21.

It belongs to the peptidase A1 family. In terms of processing, N-glycosylated. As to expression, expressed in chorionic epithelium (trophectoderm).

Its subcellular location is the secreted. The protein localises to the extracellular space. This chain is Pregnancy-associated glycoprotein 72, found in Bison bison (American bison).